The following is a 68-amino-acid chain: Negative regulatory protein YxlD (68 aa).

2 helical membrane-spanning segments follow: residues 5–25 (EIII…FLFI) and 37–57 (WGIV…FFVI).

The protein localises to the cell membrane. Its function is as follows. Together with YxlE, is important for negative regulation of sigma Y activity, being the major negative regulator. In Bacillus subtilis (strain 168), this protein is Negative regulatory protein YxlD (yxlD).